A 217-amino-acid chain; its full sequence is Thiamine-phosphate synthase (217 aa).

Residues 44–48 and asparagine 76 contribute to the 4-amino-2-methyl-5-(diphosphooxymethyl)pyrimidine site; that span reads QYREK. Mg(2+) is bound by residues aspartate 77 and aspartate 96. Serine 115 serves as a coordination point for 4-amino-2-methyl-5-(diphosphooxymethyl)pyrimidine. Residue 141–143 participates in 2-[(2R,5Z)-2-carboxy-4-methylthiazol-5(2H)-ylidene]ethyl phosphate binding; it reads TKT. A 4-amino-2-methyl-5-(diphosphooxymethyl)pyrimidine-binding site is contributed by lysine 144. 2-[(2R,5Z)-2-carboxy-4-methylthiazol-5(2H)-ylidene]ethyl phosphate-binding positions include glycine 172 and 192–193; that span reads VS.

This sequence belongs to the thiamine-phosphate synthase family. Mg(2+) serves as cofactor.

The enzyme catalyses 2-[(2R,5Z)-2-carboxy-4-methylthiazol-5(2H)-ylidene]ethyl phosphate + 4-amino-2-methyl-5-(diphosphooxymethyl)pyrimidine + 2 H(+) = thiamine phosphate + CO2 + diphosphate. The catalysed reaction is 2-(2-carboxy-4-methylthiazol-5-yl)ethyl phosphate + 4-amino-2-methyl-5-(diphosphooxymethyl)pyrimidine + 2 H(+) = thiamine phosphate + CO2 + diphosphate. It carries out the reaction 4-methyl-5-(2-phosphooxyethyl)-thiazole + 4-amino-2-methyl-5-(diphosphooxymethyl)pyrimidine + H(+) = thiamine phosphate + diphosphate. It participates in cofactor biosynthesis; thiamine diphosphate biosynthesis; thiamine phosphate from 4-amino-2-methyl-5-diphosphomethylpyrimidine and 4-methyl-5-(2-phosphoethyl)-thiazole: step 1/1. In terms of biological role, condenses 4-methyl-5-(beta-hydroxyethyl)thiazole monophosphate (THZ-P) and 2-methyl-4-amino-5-hydroxymethyl pyrimidine pyrophosphate (HMP-PP) to form thiamine monophosphate (TMP). The protein is Thiamine-phosphate synthase of Lawsonia intracellularis (strain PHE/MN1-00).